The following is a 462-amino-acid chain: A-type ATP synthase subunit B (462 aa).

It belongs to the ATPase alpha/beta chains family. In terms of assembly, has multiple subunits with at least A(3), B(3), C, D, E, F, H, I and proteolipid K(x).

The protein localises to the cell membrane. In terms of biological role, component of the A-type ATP synthase that produces ATP from ADP in the presence of a proton gradient across the membrane. The B chain is a regulatory subunit. The protein is A-type ATP synthase subunit B of Cenarchaeum symbiosum (strain A).